A 254-amino-acid chain; its full sequence is Probable septum site-determining protein MinC (254 aa).

The protein belongs to the MinC family. As to quaternary structure, interacts with MinD and FtsZ.

Cell division inhibitor that blocks the formation of polar Z ring septums. Rapidly oscillates between the poles of the cell to destabilize FtsZ filaments that have formed before they mature into polar Z rings. Prevents FtsZ polymerization. The polypeptide is Probable septum site-determining protein MinC (Burkholderia ambifaria (strain ATCC BAA-244 / DSM 16087 / CCUG 44356 / LMG 19182 / AMMD) (Burkholderia cepacia (strain AMMD))).